Here is a 149-residue protein sequence, read N- to C-terminus: MAAAASESLSSGGPGAVRLPRLPPLKVLAGQLRRHAEGGPGAWRLSRAAVGRAPLELVAVWMQGTVLAAEGGQARLRDSSGAFSVRGLERVPRGRPCLLPGKYVMVMGVVQACSPEPCLQAVKMTDLSDNPVHESMWELEVEDLHRNIP.

Ser-8 is subject to Phosphoserine. A DNA-binding region (OB) is located at residues Ser-46 to Glu-116.

It belongs to the RMI2 family. Component of the RMI complex, containing at least TOP3A, RMI1 and RMI2. The RMI complex interacts with BLM. In terms of processing, phosphorylated during mitosis.

It localises to the nucleus. Its function is as follows. Essential component of the RMI complex, a complex that plays an important role in the processing of homologous recombination intermediates. It is required to regulate sister chromatid segregation and to limit DNA crossover. Essential for the stability, localization, and function of BLM, TOP3A, and complexes containing BLM. In the RMI complex, it is required to target BLM to chromatin and stress-induced nuclear foci and mitotic phosphorylation of BLM. The sequence is that of RecQ-mediated genome instability protein 2 (Rmi2) from Mus musculus (Mouse).